The sequence spans 208 residues: Superoxide dismutase [Mn] (208 aa).

Mn(2+)-binding residues include histidine 27, histidine 81, aspartate 168, and histidine 172.

This sequence belongs to the iron/manganese superoxide dismutase family. In terms of assembly, homodimer. Mn(2+) serves as cofactor.

The enzyme catalyses 2 superoxide + 2 H(+) = H2O2 + O2. Functionally, destroys superoxide anion radicals which are normally produced within the cells and which are toxic to biological systems. In Buchnera aphidicola subsp. Baizongia pistaciae (strain Bp), this protein is Superoxide dismutase [Mn] (sodA).